Here is a 921-residue protein sequence, read N- to C-terminus: Translation initiation factor IF-2 (921 aa).

Residues 1-296 are disordered; that stretch reads MADQNTPGDK…PGPQKQRGRL (296 aa). Positions 80–89 are enriched in low complexity; that stretch reads RPSGPRPSGG. The span at 117–183 shows a compositional bias: basic and acidic residues; the sequence is ARVRDLEERR…AKKRFGEGEA (67 aa). Low complexity-rich tracts occupy residues 184-237 and 248-257; these read PRPA…ARPA and GRAPAAVAAG. Residues 417 to 586 form the tr-type G domain; it reads PRSPVVTVMG…MIALQADILD (170 aa). The G1 stretch occupies residues 426–433; sequence GHVDHGKT. Residue 426-433 coordinates GTP; the sequence is GHVDHGKT. The segment at 451–455 is G2; sequence GITQH. The G3 stretch occupies residues 474–477; sequence DTPG. GTP contacts are provided by residues 474-478 and 528-531; these read DTPGH and NKID. The G4 stretch occupies residues 528-531; that stretch reads NKID. The G5 stretch occupies residues 564–566; it reads SAK.

Belongs to the TRAFAC class translation factor GTPase superfamily. Classic translation factor GTPase family. IF-2 subfamily.

The protein resides in the cytoplasm. Functionally, one of the essential components for the initiation of protein synthesis. Protects formylmethionyl-tRNA from spontaneous hydrolysis and promotes its binding to the 30S ribosomal subunits. Also involved in the hydrolysis of GTP during the formation of the 70S ribosomal complex. The sequence is that of Translation initiation factor IF-2 from Bradyrhizobium sp. (strain ORS 278).